The chain runs to 433 residues: Homoserine O-acetyltransferase (433 aa).

One can recognise an AB hydrolase-1 domain in the interval Asn41–Pro385. The disordered stretch occupies residues Val55–Gly74. Residue Ser166 is the Nucleophile of the active site. Residue Arg237 coordinates substrate. Active-site residues include Asp345 and His378. Asp379 lines the substrate pocket. Residues Arg403–Gly433 are disordered.

The protein belongs to the AB hydrolase superfamily. MetX family. As to quaternary structure, homodimer.

It is found in the cytoplasm. It catalyses the reaction L-homoserine + acetyl-CoA = O-acetyl-L-homoserine + CoA. The protein operates within amino-acid biosynthesis; L-methionine biosynthesis via de novo pathway; O-acetyl-L-homoserine from L-homoserine: step 1/1. Functionally, transfers an acetyl group from acetyl-CoA to L-homoserine, forming acetyl-L-homoserine. This Halorubrum lacusprofundi (strain ATCC 49239 / DSM 5036 / JCM 8891 / ACAM 34) protein is Homoserine O-acetyltransferase.